The chain runs to 386 residues: Methionine aminopeptidase 1 (386 aa).

Alanine 2 is modified (N-acetylalanine). The segment at 6–59 (TRVCETDGCSSEAKLQCPTCIKLGIQGSYFCSQECFKGSWATHKLLHKKAKDEK) adopts a C6H2-type zinc-finger fold. 8 residues coordinate Zn(2+): cysteine 9, cysteine 14, cysteine 22, cysteine 25, cysteine 36, cysteine 40, histidine 48, and histidine 52. Position 203 (histidine 203) interacts with a protein. Zn(2+)-binding residues include aspartate 220, aspartate 231, and histidine 294. Residue histidine 301 coordinates a protein. The Zn(2+) site is built by glutamate 327 and glutamate 358.

The protein belongs to the peptidase M24A family. Methionine aminopeptidase type 1 subfamily. In terms of assembly, associates with the 60S ribosomal subunit of the 80S translational complex. Zn(2+) is required as a cofactor. The cofactor is Co(2+). It depends on Mn(2+) as a cofactor. Fe(2+) serves as cofactor.

The protein resides in the cytoplasm. The enzyme catalyses Release of N-terminal amino acids, preferentially methionine, from peptides and arylamides.. Functionally, cotranslationally removes the N-terminal methionine from nascent proteins. The N-terminal methionine is often cleaved when the second residue in the primary sequence is small and uncharged (Met-Ala-, Cys, Gly, Pro, Ser, Thr, or Val). Required for normal progression through the cell cycle. This is Methionine aminopeptidase 1 (METAP1) from Homo sapiens (Human).